A 466-amino-acid chain; its full sequence is Signal recognition particle 54 kDa protein (466 aa).

Residues 104–111, 184–188, and 242–245 each bind GTP; these read GLQGSGKT, DTAGR, and TKLD. Residues 446-466 form a disordered region; the sequence is QQQGGGGMGGLGGGGGLGPFG. The segment covering 448–466 has biased composition (gly residues); the sequence is QGGGGMGGLGGGGGLGPFG.

It belongs to the GTP-binding SRP family. SRP54 subfamily. As to quaternary structure, part of the signal recognition particle protein translocation system, which is composed of SRP and FtsY. Archaeal SRP consists of a 7S RNA molecule of 300 nucleotides and two protein subunits: SRP54 and SRP19.

The protein resides in the cytoplasm. The enzyme catalyses GTP + H2O = GDP + phosphate + H(+). In terms of biological role, involved in targeting and insertion of nascent membrane proteins into the cytoplasmic membrane. Binds to the hydrophobic signal sequence of the ribosome-nascent chain (RNC) as it emerges from the ribosomes. The SRP-RNC complex is then targeted to the cytoplasmic membrane where it interacts with the SRP receptor FtsY. This chain is Signal recognition particle 54 kDa protein, found in Haloquadratum walsbyi (strain DSM 16790 / HBSQ001).